A 152-amino-acid chain; its full sequence is Transcriptional repressor NrdR (152 aa).

A zinc finger lies at 3-34 (CPACQHNGTRVLDSRPVDEGRSIRRRRECESC). The ATP-cone domain maps to 49–139 (LIVVKKEGIR…VYRQFKDINV (91 aa)).

The protein belongs to the NrdR family. Zn(2+) serves as cofactor.

Negatively regulates transcription of bacterial ribonucleotide reductase nrd genes and operons by binding to NrdR-boxes. In Bacillus licheniformis (strain ATCC 14580 / DSM 13 / JCM 2505 / CCUG 7422 / NBRC 12200 / NCIMB 9375 / NCTC 10341 / NRRL NRS-1264 / Gibson 46), this protein is Transcriptional repressor NrdR.